We begin with the raw amino-acid sequence, 416 residues long: 4-hydroxy-3-methylbut-2-en-1-yl diphosphate synthase (flavodoxin) (416 aa).

[4Fe-4S] cluster is bound by residues C304, C307, C350, and E357.

It belongs to the IspG family. It depends on [4Fe-4S] cluster as a cofactor.

The enzyme catalyses (2E)-4-hydroxy-3-methylbut-2-enyl diphosphate + oxidized [flavodoxin] + H2O + 2 H(+) = 2-C-methyl-D-erythritol 2,4-cyclic diphosphate + reduced [flavodoxin]. Its pathway is isoprenoid biosynthesis; isopentenyl diphosphate biosynthesis via DXP pathway; isopentenyl diphosphate from 1-deoxy-D-xylulose 5-phosphate: step 5/6. Its function is as follows. Converts 2C-methyl-D-erythritol 2,4-cyclodiphosphate (ME-2,4cPP) into 1-hydroxy-2-methyl-2-(E)-butenyl 4-diphosphate. This is 4-hydroxy-3-methylbut-2-en-1-yl diphosphate synthase (flavodoxin) from Rhizobium johnstonii (strain DSM 114642 / LMG 32736 / 3841) (Rhizobium leguminosarum bv. viciae).